A 187-amino-acid chain; its full sequence is Elongation factor P (187 aa).

Belongs to the elongation factor P family.

It localises to the cytoplasm. It participates in protein biosynthesis; polypeptide chain elongation. In terms of biological role, involved in peptide bond synthesis. Stimulates efficient translation and peptide-bond synthesis on native or reconstituted 70S ribosomes in vitro. Probably functions indirectly by altering the affinity of the ribosome for aminoacyl-tRNA, thus increasing their reactivity as acceptors for peptidyl transferase. This is Elongation factor P from Corynebacterium efficiens (strain DSM 44549 / YS-314 / AJ 12310 / JCM 11189 / NBRC 100395).